A 253-amino-acid polypeptide reads, in one-letter code: 1-(5-phosphoribosyl)-5-[(5-phosphoribosylamino)methylideneamino] imidazole-4-carboxamide isomerase (253 aa).

Aspartate 8 functions as the Proton acceptor in the catalytic mechanism. The active-site Proton donor is aspartate 129.

It belongs to the HisA/HisF family.

Its subcellular location is the cytoplasm. The enzyme catalyses 1-(5-phospho-beta-D-ribosyl)-5-[(5-phospho-beta-D-ribosylamino)methylideneamino]imidazole-4-carboxamide = 5-[(5-phospho-1-deoxy-D-ribulos-1-ylimino)methylamino]-1-(5-phospho-beta-D-ribosyl)imidazole-4-carboxamide. Its pathway is amino-acid biosynthesis; L-histidine biosynthesis; L-histidine from 5-phospho-alpha-D-ribose 1-diphosphate: step 4/9. This chain is 1-(5-phosphoribosyl)-5-[(5-phosphoribosylamino)methylideneamino] imidazole-4-carboxamide isomerase, found in Microcystis aeruginosa (strain NIES-843 / IAM M-2473).